The sequence spans 118 residues: 5-hydroxyisourate hydrolase (118 aa).

Residues H11, R51, and Y115 each contribute to the substrate site.

Belongs to the transthyretin family. 5-hydroxyisourate hydrolase subfamily. In terms of assembly, homotetramer.

The protein localises to the peroxisome. It catalyses the reaction 5-hydroxyisourate + H2O = 5-hydroxy-2-oxo-4-ureido-2,5-dihydro-1H-imidazole-5-carboxylate + H(+). It participates in purine metabolism; urate degradation; (S)-allantoin from urate: step 2/3. Its function is as follows. Catalyzes the hydrolysis of 5-hydroxyisourate (HIU) to 2-oxo-4-hydroxy-4-carboxy-5-ureidoimidazoline (OHCU). The chain is 5-hydroxyisourate hydrolase (Urah) from Mus musculus (Mouse).